Here is a 428-residue protein sequence, read N- to C-terminus: Something about silencing protein 10 (428 aa).

The tract at residues 1 to 93 (MDSDGDDYVM…NTMDWGSKRS (93 aa)) is disordered. 2 stretches are compositionally biased toward acidic residues: residues 15–24 (QEYDDEEREI) and 46–62 (SDDD…EQQD). 4 positions are modified to phosphoserine: S152, S323, S324, and S337. Positions 317–386 (GQQASVSSDD…LRNPRVKHRG (70 aa)) are disordered. A compositionally biased stretch (acidic residues) spans 324-336 (SDDDDNDDDDDAE). The span at 344–353 (EEAGEEEEEE) shows a compositional bias: acidic residues. The span at 370–386 (TPHRKKELRNPRVKHRG) shows a compositional bias: basic residues.

This sequence belongs to the SAS10 family.

It localises to the nucleus. In terms of biological role, essential for gene silencing: has a role in the structure of silenced chromatin. May be involved in gene regulation during development. Binds RNA. This chain is Something about silencing protein 10, found in Drosophila melanogaster (Fruit fly).